The primary structure comprises 130 residues: Sec-independent protein translocase protein TatB (130 aa).

A helical membrane pass occupies residues 1-21; that stretch reads MFDIGFTELTLIFIIGLVVLG. 2 stretches are compositionally biased toward basic and acidic residues: residues 57–67 and 111–130; these read QDMQERMEKQM and PSDK…RRHD. The tract at residues 57–130 is disordered; the sequence is QDMQERMEKQ…NHDQDSRRHD (74 aa).

This sequence belongs to the TatB family. The Tat system comprises two distinct complexes: a TatABC complex, containing multiple copies of TatA, TatB and TatC subunits, and a separate TatA complex, containing only TatA subunits. Substrates initially bind to the TatABC complex, which probably triggers association of the separate TatA complex to form the active translocon.

The protein resides in the cell inner membrane. In terms of biological role, part of the twin-arginine translocation (Tat) system that transports large folded proteins containing a characteristic twin-arginine motif in their signal peptide across membranes. Together with TatC, TatB is part of a receptor directly interacting with Tat signal peptides. TatB may form an oligomeric binding site that transiently accommodates folded Tat precursor proteins before their translocation. This is Sec-independent protein translocase protein TatB from Alcanivorax borkumensis (strain ATCC 700651 / DSM 11573 / NCIMB 13689 / SK2).